A 234-amino-acid chain; its full sequence is Cyclin-J18 (234 aa).

It belongs to the cyclin family.

The chain is Cyclin-J18 (CYCJ18) from Arabidopsis thaliana (Mouse-ear cress).